We begin with the raw amino-acid sequence, 248 residues long: Probable transcriptional regulatory protein PSPPH_3775 (248 aa).

Belongs to the TACO1 family.

It is found in the cytoplasm. The sequence is that of Probable transcriptional regulatory protein PSPPH_3775 from Pseudomonas savastanoi pv. phaseolicola (strain 1448A / Race 6) (Pseudomonas syringae pv. phaseolicola (strain 1448A / Race 6)).